A 202-amino-acid chain; its full sequence is uncharacterized protein (202 aa).

One can recognise a Smr domain in the interval 116-196 (LDLHGMTCSE…GKGTTWVLLK (81 aa)).

This is an uncharacterized protein from Treponema pallidum (strain Nichols).